The sequence spans 354 residues: Glutamine synthetase (354 aa).

A GS beta-grasp domain is found at 22 to 101; sequence FHAEYVWIDG…VLSETYNNDG (80 aa). Residues 108 to 354 form the GS catalytic domain; the sequence is HRHHTAKVME…IIIETTILDK (247 aa).

This sequence belongs to the glutamine synthetase family. Homooctamer.

The protein localises to the cytoplasm. It carries out the reaction L-glutamate + NH4(+) + ATP = L-glutamine + ADP + phosphate + H(+). This is Glutamine synthetase (GLN1) from Amanita muscaria (Fly agaric).